A 653-amino-acid chain; its full sequence is MKLFDEIPAERPATPLLDTCEHPAALHDFNATQLRQLADELRAYLLYSVGCTGGHFGAGLGVVELTVALHHILDTPYDRLVWDVGHQAYPHKILTGRREQMSTIRQFGGLAAFPKRDESPYDTFGVGHSSTSISAALGMALAARTKGERRRVCAVIGDGALSAGMAFEALAHAGHVDANMLVILNDNEMSISENVGGMASYLARILVSKPYTVMRENSKRVLSHLPGALELARRTEEHVKGMVSPATLFEEMGFNYIGPIDGHDLPTLVQTLGNMANLEGPQFLHIKTCKGRGFRPAEADPIGYHAITKLEKTTSEPPPKKEPRSPNAATAEPEAQPKPQPKPRKYCNVFGEWICDMAAVDARLIGITPAMREGSDLIRFSREYPERYYDVAIAEQHAVTLAAGMACEAMKPVVAIYSTFLQRGYDQLIHDVAVQALDVTFAIDRAGVVGEDGPTHHGALDLSFLRCIPGMIVLAPADEAECRAMLSAAYHHPGPAAVRYPRGTGPGTQVASNLEALPIGEAETRRSGREGGVALLAFGSMNGPAGEVAERLDATHLNMRSVKPLDREAILAAARDHRLLVTLEESVVAGGAGSGVNELLAAEGVQVEVLNLGLPDDFVEHGKPAELLAACGLDAEGIETAVRRRLETSRADD.

Thiamine diphosphate contacts are provided by residues histidine 86 and 127-129; that span reads GHS. Aspartate 158 contributes to the Mg(2+) binding site. Residues 159–160, asparagine 187, and phenylalanine 294 contribute to the thiamine diphosphate site; that span reads GA. Asparagine 187 serves as a coordination point for Mg(2+). Over residues 309–324 the composition is skewed to basic and acidic residues; it reads KLEKTTSEPPPKKEPR. Residues 309–343 are disordered; sequence KLEKTTSEPPPKKEPRSPNAATAEPEAQPKPQPKP. Glutamate 395 contributes to the thiamine diphosphate binding site.

It belongs to the transketolase family. DXPS subfamily. In terms of assembly, homodimer. Mg(2+) serves as cofactor. Thiamine diphosphate is required as a cofactor.

It catalyses the reaction D-glyceraldehyde 3-phosphate + pyruvate + H(+) = 1-deoxy-D-xylulose 5-phosphate + CO2. It participates in metabolic intermediate biosynthesis; 1-deoxy-D-xylulose 5-phosphate biosynthesis; 1-deoxy-D-xylulose 5-phosphate from D-glyceraldehyde 3-phosphate and pyruvate: step 1/1. In terms of biological role, catalyzes the acyloin condensation reaction between C atoms 2 and 3 of pyruvate and glyceraldehyde 3-phosphate to yield 1-deoxy-D-xylulose-5-phosphate (DXP). This is 1-deoxy-D-xylulose-5-phosphate synthase from Chromohalobacter salexigens (strain ATCC BAA-138 / DSM 3043 / CIP 106854 / NCIMB 13768 / 1H11).